An 881-amino-acid chain; its full sequence is Probable inorganic carbon transporter subunit DabA (881 aa).

4 residues coordinate Zn(2+): Cys399, Asp401, His585, and Cys600.

The protein belongs to the inorganic carbon transporter (TC 9.A.2) DabA family. As to quaternary structure, forms a complex with DabB. Zn(2+) is required as a cofactor.

The protein localises to the cell membrane. Part of an energy-coupled inorganic carbon pump. The sequence is that of Probable inorganic carbon transporter subunit DabA from Geobacillus sp. (strain WCH70).